The following is an 865-amino-acid chain: Catenin alpha-2 (865 aa).

The span at 823-839 shows a compositional bias: basic and acidic residues; it reads PEKKPLVKREKPEECQT. The disordered stretch occupies residues 823–851; that stretch reads PEKKPLVKREKPEECQTRVRRGSQKKHIS. Basic residues predominate over residues 840–850; that stretch reads RVRRGSQKKHI.

Belongs to the vinculin/alpha-catenin family.

It is found in the cell membrane. The protein localises to the cytoplasm. It localises to the cytoskeleton. The protein resides in the cell junction. Its subcellular location is the adherens junction. It is found in the cell projection. The protein localises to the axon. It localises to the nucleus. In terms of biological role, may function as a linker between cadherin adhesion receptors and the cytoskeleton to regulate cell-cell adhesion and differentiation in the nervous system. The chain is Catenin alpha-2 (Ctnna2) from Danio rerio (Zebrafish).